Here is a 113-residue protein sequence, read N- to C-terminus: ATP-dependent Clp protease adapter protein ClpS (113 aa).

A compositionally biased stretch (pro residues) spans 1–11; that stretch reads MTRPTIPPGPP. 2 disordered regions span residues 1–24 and 92–113; these read MTRP…ERTE and TAHA…SEGE.

The protein belongs to the ClpS family. In terms of assembly, binds to the N-terminal domain of the chaperone ClpA.

Its function is as follows. Involved in the modulation of the specificity of the ClpAP-mediated ATP-dependent protein degradation. In Deinococcus radiodurans (strain ATCC 13939 / DSM 20539 / JCM 16871 / CCUG 27074 / LMG 4051 / NBRC 15346 / NCIMB 9279 / VKM B-1422 / R1), this protein is ATP-dependent Clp protease adapter protein ClpS.